Consider the following 546-residue polypeptide: CTP synthase (546 aa).

An amidoligase domain region spans residues 1–266 (MTTNYIFVTG…DDLVCTRFGI (266 aa)). Ser14 contributes to the CTP binding site. Ser14 is a binding site for UTP. Residues 15–20 (SLGKGI) and Asp72 contribute to the ATP site. Mg(2+) is bound by residues Asp72 and Glu140. Residues 147-149 (DIE), 187-192 (KTKPTQ), and Lys223 each bind CTP. UTP-binding positions include 187–192 (KTKPTQ) and Lys223. Residue 239-241 (KDV) coordinates ATP. In terms of domain architecture, Glutamine amidotransferase type-1 spans 291 to 542 (TIGMVGKYIE…VKAAGQYSRG (252 aa)). Position 352 (Gly352) interacts with L-glutamine. The active-site Nucleophile; for glutamine hydrolysis is Cys379. Residues 380–383 (LGMQ), Glu403, and Arg470 contribute to the L-glutamine site. Catalysis depends on residues His515 and Glu517.

The protein belongs to the CTP synthase family. As to quaternary structure, homotetramer.

The catalysed reaction is UTP + L-glutamine + ATP + H2O = CTP + L-glutamate + ADP + phosphate + 2 H(+). It carries out the reaction L-glutamine + H2O = L-glutamate + NH4(+). The enzyme catalyses UTP + NH4(+) + ATP = CTP + ADP + phosphate + 2 H(+). Its pathway is pyrimidine metabolism; CTP biosynthesis via de novo pathway; CTP from UDP: step 2/2. Allosterically activated by GTP, when glutamine is the substrate; GTP has no effect on the reaction when ammonia is the substrate. The allosteric effector GTP functions by stabilizing the protein conformation that binds the tetrahedral intermediate(s) formed during glutamine hydrolysis. Inhibited by the product CTP, via allosteric rather than competitive inhibition. Catalyzes the ATP-dependent amination of UTP to CTP with either L-glutamine or ammonia as the source of nitrogen. Regulates intracellular CTP levels through interactions with the four ribonucleotide triphosphates. In Vibrio parahaemolyticus serotype O3:K6 (strain RIMD 2210633), this protein is CTP synthase.